A 77-amino-acid chain; its full sequence is MAAIEVGRVCIKTLGREAGNTCVIVEVLDKNFVVIDGSVKRRRCNLKHVEPTDKKVDLEKAASTEEVKLALDAAGLL.

Belongs to the eukaryotic ribosomal protein eL14 family.

This is Large ribosomal subunit protein eL14 from Methanococcus maripaludis (strain C6 / ATCC BAA-1332).